Here is a 382-residue protein sequence, read N- to C-terminus: MAARNWIGLFSRGEGNNLTNALERGYEAALLIQSLELEFYADRKVRPELELSVPRSVQATVLRRFHAALQICRSSLSTVTPNRGQLDPQELRQLQLIETVVSRYSGKRSSSKSGMSTAPELLPRSLLGVFDSVRRQLDPSSEESVVAGFRRRRDSTLASLRILLLLVLVPLLVQQVSNTYIVGPAVERLSPDLSFLSYPKPQLEEVAVEKLRIYKEELEFDALLKGQEPLSSDLLVIKLRERAQELKQEADQESVQAIKNVLADLAGLMAFVVVCLVSRDQLRVLRGFLDEAIYGLSDSAKAFAIILFTDIFVGYHSPEGWTVLLDGIAHHFGLPTQENFILLFIATFPVILATIFKYWIFRYLNRVSPSSVATLKGMNGGG.

4 helical membrane passes run 162–182 (ILLL…TYIV), 257–277 (AIKN…VCLV), 305–325 (IILF…TVLL), and 340–360 (FILL…KYWI).

This sequence belongs to the CemA family.

Its subcellular location is the cell inner membrane. Functionally, required for H(+) efflux immediately after light irradiation to form a rapid H(+) concentration gradient across the thylakoid membranes. Together with PxcL, contributes to transient H(+) uptake following dark to light transition. This Parasynechococcus marenigrum (strain WH8102) protein is Proton extrusion protein PxcA.